We begin with the raw amino-acid sequence, 245 residues long: Aliphatic sulfonates import ATP-binding protein SsuB 2 (245 aa).

The region spanning valine 15–isoleucine 229 is the ABC transporter domain. ATP is bound at residue glycine 47 to serine 54.

The protein belongs to the ABC transporter superfamily. Aliphatic sulfonates importer (TC 3.A.1.17.2) family. In terms of assembly, the complex is composed of two ATP-binding proteins (SsuB), two transmembrane proteins (SsuC) and a solute-binding protein (SsuA).

Its subcellular location is the cell inner membrane. The catalysed reaction is ATP + H2O + aliphatic sulfonate-[sulfonate-binding protein]Side 1 = ADP + phosphate + aliphatic sulfonateSide 2 + [sulfonate-binding protein]Side 1.. In terms of biological role, part of the ABC transporter complex SsuABC involved in aliphatic sulfonates import. Responsible for energy coupling to the transport system. This is Aliphatic sulfonates import ATP-binding protein SsuB 2 from Paracoccus denitrificans (strain Pd 1222).